A 676-amino-acid chain; its full sequence is Forkhead box protein biniou (676 aa).

Disordered regions lie at residues 22-50 (YHDP…GHPY), 131-160 (AHSA…SSST), 203-232 (QEQA…SRIS), 249-312 (NYSS…PEKP), and 583-651 (IQHA…AYLP). The span at 34–48 (PHAHSHPHQHTHTGH) shows a compositional bias: basic residues. The segment covering 133–160 (SAGSASPQSNSKTPTDLPQDLQYASSST) has biased composition (polar residues). The segment covering 203-220 (QEQAGQQQPQQLPAQQLQ) has biased composition (low complexity). Polar residues predominate over residues 257–273 (PAKSLNGSESSPPSQNH). Positions 311 to 408 (KPALSYINMI…DEGSLRRRPR (98 aa)) form a DNA-binding region, fork-head. A compositionally biased stretch (low complexity) spans 583 to 593 (IQHAQAQAQAQ). Residues 594 to 611 (AHHHHHQHHASHPSHSHQ) show a composition bias toward basic residues. Residues 612 to 625 (GHGSMHQNHGTSST) are compositionally biased toward low complexity. Basic and acidic residues predominate over residues 637–647 (GIDHSPIDRKP).

Binds to DNA. As to expression, in embryo, expressed in all types of visceral muscles and their progenitors (at protein level). In late stage 10 embryo, expressed in the caudal visceral mesoderm and trunk and hindgut visceral mesoderm progenitors.

Its subcellular location is the nucleus. Functionally, component of a regulatory network controlling visceral mesoderm development and midgut morphogenesis. Transcriptional regulator involved in the activation of a large number of genes in the visceral mesoderm including betaTub60D, dpp and Hand. Binds to and regulates a number of enhancers driving expression in the visceral mesoderm in a temporally and spatially restricted manner. Also to binds to enhancers cooperatively with activators, such as bap or HLH54F, to coregulate expression of shared target genes in the visceral mesoderm. Binds to the Ndg enhancer and drives expression of Ndg in the late visceral musculature. May be involved in the transcriptional regulation of wupA in the visceral mesoderm. Plays an indirect role in the later stages of salivary gland positioning. This chain is Forkhead box protein biniou (bin), found in Drosophila melanogaster (Fruit fly).